The following is a 118-amino-acid chain: MDPRLRAPIFLPILTPETLQKKKQIKGNKTTIYKNGFMLFRSRLHKILNLSGDWAGASAKCSIIWHTLPQNVRLAWSQLAELSHYQDVRKQIAKLERILYSKRLNGHNNYKLHISRVQ.

The HMG box DNA-binding region spans 29–97 (KTTIYKNGFM…VRKQIAKLER (69 aa)).

It is found in the nucleus. Functionally, mating type proteins are sequence specific DNA-binding proteins that act as master switches in yeast differentiation by controlling gene expression in a cell type-specific fashion. Required for conjugation and efficient meiosis. This Schizosaccharomyces kambucha (Fission yeast) protein is Mating-type P-specific polypeptide Pc (matPc).